Reading from the N-terminus, the 157-residue chain is Large ribosomal subunit protein eL21 (157 aa).

A disordered region spans residues 110 to 132 (QANDQAKAEGNKAGKRVSTKRNP).

It belongs to the eukaryotic ribosomal protein eL21 family.

In Tetrahymena thermophila (strain SB210), this protein is Large ribosomal subunit protein eL21 (RPL21).